The following is a 187-amino-acid chain: MGCCGCSGGCGSGCGGCGSGCGGCGSSCCVPICCCKPVCCCVPACSCSSCGSCGGSKGGRGSCGGSKGDCGSCGGSKGGCGSCGCSQCSCYKPCCCSSGCGSSCCQSSCCKPCCSQSSCCKPCSCSSGCGSSCCQSSCCKPCCSQSSCCKPCCCSSGCGSSCCQSSCCKPCCSQSSCCVPICCQCKI.

9 consecutive repeat copies span residues 28-31 (CCVP), 34-37 (CCKP), 40-43 (CCVP), 109-112 (CCKP), 119-122 (CCKP), 138-141 (CCKP), 148-151 (CCKP), 167-170 (CCKP), and 177-180 (CCVP). Residues 28–180 (CCVPICCCKP…CCSQSSCCVP (153 aa)) form a 9 X 4 AA repeats of C-C-X-P region.

It belongs to the KRTAP type 5 family. As to expression, restricted to hair root, not detected in any other tissues. Expressed in cuticle layers of differentiating hair follicles.

In terms of biological role, in the hair cortex, hair keratin intermediate filaments are embedded in an interfilamentous matrix, consisting of hair keratin-associated protein (KRTAP), which are essential for the formation of a rigid and resistant hair shaft through their extensive disulfide bond cross-linking with abundant cysteine residues of hair keratins. The matrix proteins include the high-sulfur and high-glycine-tyrosine keratins. This Homo sapiens (Human) protein is Keratin-associated protein 5-8 (KRTAP5-8).